The primary structure comprises 603 residues: Probable L-gulonolactone oxidase 6 (603 aa).

The signal sequence occupies residues 1–35 (MAFTSSPSYGSLNAAFWRTIFVVHCISTLVFTTIS). One can recognise an FAD-binding PCMH-type domain in the interval 64 to 246 (STCRAANVAY…SQVTLKLQPM (183 aa)).

The protein belongs to the oxygen-dependent FAD-linked oxidoreductase family. Requires FAD as cofactor.

The enzyme catalyses L-gulono-1,4-lactone + O2 = L-ascorbate + H2O2 + H(+). It functions in the pathway cofactor biosynthesis; L-ascorbate biosynthesis. May be involved in the biosynthesis of ascorbic acid. The sequence is that of Probable L-gulonolactone oxidase 6 from Arabidopsis thaliana (Mouse-ear cress).